Consider the following 197-residue polypeptide: Dephospho-CoA kinase (197 aa).

The 196-residue stretch at 2–197 (IIGLTGGIAS…GAIKDLANLV (196 aa)) folds into the DPCK domain. ATP is bound at residue 10-15 (ASGKST).

Belongs to the CoaE family.

It is found in the cytoplasm. It catalyses the reaction 3'-dephospho-CoA + ATP = ADP + CoA + H(+). It participates in cofactor biosynthesis; coenzyme A biosynthesis; CoA from (R)-pantothenate: step 5/5. Its function is as follows. Catalyzes the phosphorylation of the 3'-hydroxyl group of dephosphocoenzyme A to form coenzyme A. This chain is Dephospho-CoA kinase, found in Streptococcus thermophilus (strain CNRZ 1066).